The chain runs to 482 residues: Cobyrinate a,c-diamide synthase (482 aa).

One can recognise a GATase cobBQ-type domain in the interval 248–441 (RLAIAQDQAF…LHLHWGSQIS (194 aa)). Cys331 acts as the Nucleophile in catalysis.

This sequence belongs to the CobB/CbiA family. Requires Mg(2+) as cofactor.

The enzyme catalyses cob(II)yrinate + 2 L-glutamine + 2 ATP + 2 H2O = cob(II)yrinate a,c diamide + 2 L-glutamate + 2 ADP + 2 phosphate + 2 H(+). It participates in cofactor biosynthesis; adenosylcobalamin biosynthesis; cob(II)yrinate a,c-diamide from sirohydrochlorin (anaerobic route): step 10/10. Functionally, catalyzes the ATP-dependent amidation of the two carboxylate groups at positions a and c of cobyrinate, using either L-glutamine or ammonia as the nitrogen source. This is Cobyrinate a,c-diamide synthase from Synechocystis sp. (strain ATCC 27184 / PCC 6803 / Kazusa).